Reading from the N-terminus, the 572-residue chain is 2-isopropylmalate synthase (572 aa).

A Pyruvate carboxyltransferase domain is found at 31–305; the sequence is PIWMSTDLRD…DPGLDFSNIN (275 aa). Mg(2+) contacts are provided by D40, H244, H246, and N280. Residues 437-572 form a regulatory domain region; it reads NTAPIHYVGH…MNDAAESVGV (136 aa).

The protein belongs to the alpha-IPM synthase/homocitrate synthase family. LeuA type 2 subfamily. Homodimer. The cofactor is Mg(2+).

The protein resides in the cytoplasm. It catalyses the reaction 3-methyl-2-oxobutanoate + acetyl-CoA + H2O = (2S)-2-isopropylmalate + CoA + H(+). It participates in amino-acid biosynthesis; L-leucine biosynthesis; L-leucine from 3-methyl-2-oxobutanoate: step 1/4. In terms of biological role, catalyzes the condensation of the acetyl group of acetyl-CoA with 3-methyl-2-oxobutanoate (2-ketoisovalerate) to form 3-carboxy-3-hydroxy-4-methylpentanoate (2-isopropylmalate). The sequence is that of 2-isopropylmalate synthase from Paraburkholderia phytofirmans (strain DSM 17436 / LMG 22146 / PsJN) (Burkholderia phytofirmans).